Consider the following 261-residue polypeptide: DNA repair protein RecO (261 aa).

It belongs to the RecO family.

Functionally, involved in DNA repair and RecF pathway recombination. The polypeptide is DNA repair protein RecO (Chlorobium phaeobacteroides (strain BS1)).